The sequence spans 2185 residues: Genome polyprotein (2185 aa).

Glycine 2 carries N-myristoyl glycine; by host lipidation. The Cytoplasmic portion of the chain corresponds to 2 to 1495 (GAQVSTQKTG…HVSRAFICLQ (1494 aa)). The amphipathic alpha-helix stretch occupies residues 568-584 (FFQGPVEDAITAAIGRV). Active-site for protease 2A activity residues include histidine 872 and aspartate 890. Cysteine 907 and cysteine 909 together coordinate Zn(2+). Cysteine 961 acts as the For protease 2A activity in catalysis. Zn(2+) contacts are provided by cysteine 967 and histidine 969. The segment at 1101–1173 (NNSWLKKFTE…EQSAPSQSDQ (73 aa)) is membrane-binding. Residues 1101-1239 (NNSWLKKFTE…SPGAGKSVAT (139 aa)) are oligomerization. The RNA-binding stretch occupies residues 1122–1126 (AVKIQ). Residues 1205–1361 (EKKMSNYIQF…SMYSQNGKIN (157 aa)) enclose the SF3 helicase domain. Positions 1369, 1381, and 1386 each coordinate Zn(2+). The C4-type; degenerate zinc-finger motif lies at 1369 to 1386 (CDDECCPVNFKKCCPLVC). An RNA-binding region spans residues 1413–1420 (EYNHRHSV). The interval 1424 to 1429 (LEALFQ) is oligomerization. Residues 1496-1511 (ALTTFVSVAGIIYIIY) lie within the membrane without spanning it. Residues 1512–2185 (KLFAGFQGAY…TLRRKWLDSF (674 aa)) lie on the Cytoplasmic side of the membrane. Tyrosine 1521 is subject to O-(5'-phospho-RNA)-tyrosine. In terms of domain architecture, Peptidase C3 spans 1541–1719 (GPAFEFAVAM…FSAALLKHYF (179 aa)). Active-site for protease 3C activity residues include histidine 1580, glutamate 1611, and cysteine 1687. The region spanning 1950 to 2066 (GHLIAFDYSG…SYPWPIDASL (117 aa)) is the RdRp catalytic domain. Mg(2+) contacts are provided by aspartate 1956 and aspartate 2052.

Belongs to the picornaviruses polyprotein family. Interacts with capsid protein VP1 and capsid protein VP3 to form heterotrimeric protomers. As to quaternary structure, interacts with capsid protein VP0, and capsid protein VP3 to form heterotrimeric protomers. Five protomers subsequently associate to form pentamers which serve as building blocks for the capsid. Interacts with capsid protein VP2, capsid protein VP3 and capsid protein VP4 following cleavage of capsid protein VP0. Interacts with host CD55. Interacts with host CXADR. In terms of assembly, interacts with capsid protein VP1 and capsid protein VP3 in the mature capsid. Interacts with capsid protein VP0 and capsid protein VP1 to form heterotrimeric protomers. Five protomers subsequently associate to form pentamers which serve as building blocks for the capsid. Interacts with capsid protein VP4 in the mature capsid. Interacts with protein 2C; this interaction may be important for virion morphogenesis. As to quaternary structure, interacts with capsid protein VP1 and capsid protein VP3. In terms of assembly, homodimer. Homohexamer; forms a hexameric ring structure with 6-fold symmetry characteristic of AAA+ ATPases. Interacts (via N-terminus) with host RTN3 (via reticulon domain); this interaction is important for viral replication. Interacts with capsid protein VP3; this interaction may be important for virion morphogenesis. As to quaternary structure, interacts with protein 3CD. In terms of assembly, homodimer. Interacts with host GBF1. Interacts (via GOLD domain) with host ACBD3 (via GOLD domain); this interaction allows the formation of a viral protein 3A/ACBD3 heterotetramer with a 2:2 stoichiometry, which will stimulate the recruitment of host PI4KB in order to synthesize PI4P at the viral RNA replication sites. Interacts with RNA-directed RNA polymerase. As to quaternary structure, interacts with host TICAM1 (via C-terminus). In terms of assembly, interacts with protein 3AB and with RNA-directed RNA polymerase. Interacts with Viral protein genome-linked and with protein 3CD. Requires Mg(2+) as cofactor. In terms of processing, specific enzymatic cleavages in vivo by the viral proteases yield processing intermediates and the mature proteins. Post-translationally, myristoylation is required for the formation of pentamers during virus assembly. Further assembly of 12 pentamers and a molecule of genomic RNA generates the provirion. During virion maturation, immature virions are rendered infectious following cleavage of VP0 into VP4 and VP2. This maturation seems to be an autocatalytic event triggered by the presence of RNA in the capsid and it is followed by a conformational change infectious virion. In terms of processing, myristoylation is required during RNA encapsidation and formation of the mature virus particle. Post-translationally, VPg is uridylylated by the polymerase into VPg-pUpU. This acts as a nucleotide-peptide primer for the genomic RNA replication.

The protein localises to the virion. It localises to the host cytoplasm. It is found in the host cytoplasmic vesicle membrane. The protein resides in the host nucleus. It catalyses the reaction a ribonucleoside 5'-triphosphate + H2O = a ribonucleoside 5'-diphosphate + phosphate + H(+). The enzyme catalyses Selective cleavage of Tyr-|-Gly bond in the picornavirus polyprotein.. The catalysed reaction is RNA(n) + a ribonucleoside 5'-triphosphate = RNA(n+1) + diphosphate. It carries out the reaction Selective cleavage of Gln-|-Gly bond in the poliovirus polyprotein. In other picornavirus reactions Glu may be substituted for Gln, and Ser or Thr for Gly.. With respect to regulation, replication or transcription is subject to high level of random mutations by the nucleotide analog ribavirin. In terms of biological role, forms an icosahedral capsid of pseudo T=3 symmetry with capsid proteins VP2 and VP3. The capsid is 300 Angstroms in diameter, composed of 60 copies of each capsid protein and enclosing the viral positive strand RNA genome. Capsid protein VP1 mainly forms the vertices of the capsid. Capsid protein VP1 interacts with host CD55 and CXADR to provide virion attachment to target host cells. This attachment induces virion internalization. Tyrosine kinases are probably involved in the entry process. After binding to its receptor, the capsid undergoes conformational changes. Capsid protein VP1 N-terminus (that contains an amphipathic alpha-helix) and capsid protein VP4 are externalized. Together, they shape a pore in the host membrane through which viral genome is translocated to host cell cytoplasm. Forms an icosahedral capsid of pseudo T=3 symmetry with capsid proteins VP2 and VP3. The capsid is 300 Angstroms in diameter, composed of 60 copies of each capsid protein and enclosing the viral positive strand RNA genome. Functionally, lies on the inner surface of the capsid shell. After binding to the host receptor, the capsid undergoes conformational changes. Capsid protein VP4 is released, Capsid protein VP1 N-terminus is externalized, and together, they shape a pore in the host membrane through which the viral genome is translocated into the host cell cytoplasm. Its function is as follows. Component of immature procapsids, which is cleaved into capsid proteins VP4 and VP2 after maturation. Allows the capsid to remain inactive before the maturation step. In terms of biological role, cysteine protease that cleaves viral polyprotein and specific host proteins. It is responsible for the autocatalytic cleavage between the P1 and P2 regions, which is the first cleavage occurring in the polyprotein. Also cleaves the host translation initiation factor EIF4G1, in order to shut down the capped cellular mRNA translation. Inhibits the host nucleus-cytoplasm protein and RNA trafficking by cleaving host members of the nuclear pores. Counteracts stress granule formation probably by antagonizing its assembly or promoting its dissassembly. Cleaves and inhibits host IFIH1/MDA5, thereby inhibiting the type-I IFN production and the establishment of the antiviral state. Cleaves and inhibits host MAVS, thereby inhibiting the type-I IFN production and the establishment of the antiviral state. Plays an essential role in the virus replication cycle by acting as a viroporin. Creates a pore in the host endoplasmic reticulum and as a consequence releases Ca2+ in the cytoplasm of infected cell. In turn, high levels of cytoplasmic calcium may trigger membrane trafficking and transport of viral ER-associated proteins to viroplasms, sites of viral genome replication. Functionally, induces and associates with structural rearrangements of intracellular membranes. Displays RNA-binding, nucleotide binding and NTPase activities. May play a role in virion morphogenesis and viral RNA encapsidation by interacting with the capsid protein VP3. Its function is as follows. Localizes the viral replication complex to the surface of membranous vesicles. Together with protein 3CD binds the Cis-Active RNA Element (CRE) which is involved in RNA synthesis initiation. Acts as a cofactor to stimulate the activity of 3D polymerase, maybe through a nucleid acid chaperone activity. In terms of biological role, localizes the viral replication complex to the surface of membranous vesicles. It inhibits host cell endoplasmic reticulum-to-Golgi apparatus transport and causes the disassembly of the Golgi complex, possibly through GBF1 interaction. This would result in depletion of MHC, trail receptors and IFN receptors at the host cell surface. Plays an essential role in viral RNA replication by recruiting ACBD3 and PI4KB at the viral replication sites, thereby allowing the formation of the rearranged membranous structures where viral replication takes place. Acts as a primer for viral RNA replication and remains covalently bound to viral genomic RNA. VPg is uridylylated prior to priming replication into VPg-pUpU. The oriI viral genomic sequence may act as a template for this. The VPg-pUpU is then used as primer on the genomic RNA poly(A) by the RNA-dependent RNA polymerase to replicate the viral genome. During genome replication, the VPg-RNA linkage is removed by the host TDP2, thereby accelerating replication. During the late stage of the replication cycle, host TDP2 is excluded from sites of viral RNA synthesis and encapsidation, allowing for the generation of progeny virions. Functionally, involved in the viral replication complex and viral polypeptide maturation. It exhibits protease activity with a specificity and catalytic efficiency that is different from protease 3C. Protein 3CD lacks polymerase activity. Protein 3CD binds to the 5'UTR of the viral genome. Its function is as follows. Major viral protease that mediates proteolytic processing of the polyprotein. Cleaves host EIF5B, contributing to host translation shutoff. Cleaves also host PABPC1, contributing to host translation shutoff. Cleaves and inhibits host RIGI, thereby inhibiting the type-I IFN production and the establishment of the antiviral state. Cleaves and inhibits host MAVS, thereby inhibiting the type-I IFN production and the establishment of the antiviral state. Cleaves and inhibits host TICAM1/TRIF, thereby inhibiting the type-I IFN production. Cleaves host NLRP1, triggers host N-glycine-mediated degradation of the autoinhibitory NLRP1 N-terminal fragment. Cleaves host transcription factor TFEB, thereby disrupting host lysosomal functions and enhancing viral infection. In terms of biological role, replicates the viral genomic RNA on the surface of intracellular membranes. May form linear arrays of subunits that propagate along a strong head-to-tail interaction called interface-I. Covalently attaches UMP to a tyrosine of VPg, which is used to prime RNA synthesis. The positive stranded RNA genome is first replicated at virus induced membranous vesicles, creating a dsRNA genomic replication form. This dsRNA is then used as template to synthesize positive stranded RNA genomes. ss(+)RNA genomes are either translated, replicated or encapsidated. The sequence is that of Genome polyprotein from Coxsackievirus B3 (strain Nancy).